A 125-amino-acid chain; its full sequence is Small ribosomal subunit protein uS13 (125 aa).

Residues 92 to 125 (RRSLPVRGQRTRTNARTRKGKRKTVAGKKKAVKK) are disordered.

This sequence belongs to the universal ribosomal protein uS13 family. Part of the 30S ribosomal subunit. Forms a loose heterodimer with protein S19. Forms two bridges to the 50S subunit in the 70S ribosome.

In terms of biological role, located at the top of the head of the 30S subunit, it contacts several helices of the 16S rRNA. In the 70S ribosome it contacts the 23S rRNA (bridge B1a) and protein L5 of the 50S subunit (bridge B1b), connecting the 2 subunits; these bridges are implicated in subunit movement. Contacts the tRNAs in the A and P-sites. The protein is Small ribosomal subunit protein uS13 of Pelodictyon phaeoclathratiforme (strain DSM 5477 / BU-1).